The sequence spans 430 residues: Divergent protein kinase domain 2A (430 aa).

The N-terminal stretch at 1–35 (MWRLVPPKLGRLSRSLKLAALGSLLVLMVLHSPSL) is a signal peptide.

This sequence belongs to the DIPK family.

It localises to the cytoplasmic vesicle. The protein resides in the COPI-coated vesicle. The protein localises to the golgi apparatus. Its subcellular location is the secreted. Its function is as follows. May play a role in cardiomyocyte proliferation through paracrine signaling and activation of the PPI3K-AKT-CDK7 signaling cascade. The chain is Divergent protein kinase domain 2A from Homo sapiens (Human).